Here is a 262-residue protein sequence, read N- to C-terminus: Phosphatidylglycerol--prolipoprotein diacylglyceryl transferase 1 (262 aa).

4 consecutive transmembrane segments (helical) span residues 15-35 (WYGI…SINA), 40-60 (LNFD…IIGA), 83-103 (QGGL…FIYC), and 108-128 (VDFL…QGIG). Arg129 is a binding site for a 1,2-diacyl-sn-glycero-3-phospho-(1'-sn-glycerol). Helical transmembrane passes span 169 to 189 (TFLY…IILY), 197 to 217 (GVVI…IEGL), and 229 to 249 (VAQL…IIIV).

This sequence belongs to the Lgt family.

Its subcellular location is the cell membrane. It carries out the reaction L-cysteinyl-[prolipoprotein] + a 1,2-diacyl-sn-glycero-3-phospho-(1'-sn-glycerol) = an S-1,2-diacyl-sn-glyceryl-L-cysteinyl-[prolipoprotein] + sn-glycerol 1-phosphate + H(+). It functions in the pathway protein modification; lipoprotein biosynthesis (diacylglyceryl transfer). Its function is as follows. Catalyzes the transfer of the diacylglyceryl group from phosphatidylglycerol to the sulfhydryl group of the N-terminal cysteine of a prolipoprotein, the first step in the formation of mature lipoproteins. The chain is Phosphatidylglycerol--prolipoprotein diacylglyceryl transferase 1 from Clostridium perfringens (strain 13 / Type A).